The chain runs to 460 residues: TNF receptor-associated factor family protein DDB_G0290883 (460 aa).

The RING-type; degenerate zinc-finger motif lies at 27-67 (CPICFEFIYKKQIYQCKSGHHACKECWEKSLETKKECMTCK). 2 TRAF-type zinc fingers span residues 141-194 (SHLI…KKEL) and 196-253 (THYK…SELQ). In terms of domain architecture, MATH spans 320–448 (GYRNKWIISN…DDKLTIEIYI (129 aa)).

This sequence belongs to the TNF receptor-associated factor family. A subfamily.

It is found in the cytoplasm. Probable adapter protein and signal transducer that links members of the tumor necrosis factor receptor family to different signaling pathways by association with the receptor cytoplasmic domain and kinases. The polypeptide is TNF receptor-associated factor family protein DDB_G0290883 (Dictyostelium discoideum (Social amoeba)).